The chain runs to 445 residues: Probable D-serine dehydratase (445 aa).

K111 carries the N6-(pyridoxal phosphate)lysine modification.

This sequence belongs to the serine/threonine dehydratase family. DsdA subfamily. It depends on pyridoxal 5'-phosphate as a cofactor.

It catalyses the reaction D-serine = pyruvate + NH4(+). This Burkholderia pseudomallei (strain 1106a) protein is Probable D-serine dehydratase.